Consider the following 224-residue polypeptide: UPF0758 protein lmo1549 (224 aa).

The MPN domain maps to 102-224 (VVRCPEDAVK…YISLKEKGYF (123 aa)). Positions 173, 175, and 186 each coordinate Zn(2+). The short motif at 173 to 186 (HNHPSGDPTPSSED) is the JAMM motif element.

It belongs to the UPF0758 family.

The chain is UPF0758 protein lmo1549 from Listeria monocytogenes serovar 1/2a (strain ATCC BAA-679 / EGD-e).